The following is a 500-amino-acid chain: Vitamin D(3) 25-hydroxylase (500 aa).

Cys446 provides a ligand contact to heme.

Belongs to the cytochrome P450 family. It depends on heme as a cofactor. In terms of tissue distribution, found in liver and kidney.

It localises to the endoplasmic reticulum membrane. It is found in the microsome membrane. It catalyses the reaction calciol + reduced [NADPH--hemoprotein reductase] + O2 = calcidiol + oxidized [NADPH--hemoprotein reductase] + H2O + H(+). It carries out the reaction alfacalcidol + reduced [NADPH--hemoprotein reductase] + O2 = calcitriol + oxidized [NADPH--hemoprotein reductase] + H2O + H(+). The enzyme catalyses dodecanoate + reduced [NADPH--hemoprotein reductase] + O2 = 12-hydroxydodecanoate + oxidized [NADPH--hemoprotein reductase] + H2O + H(+). The catalysed reaction is dodecanoate + reduced [NADPH--hemoprotein reductase] + O2 = 11-hydroxydodecanoate + oxidized [NADPH--hemoprotein reductase] + H2O + H(+). It catalyses the reaction 5beta-cholestane-3alpha,7alpha-diol + reduced [NADPH--hemoprotein reductase] + O2 = 5beta-cholestane-3alpha,7alpha,25-triol + oxidized [NADPH--hemoprotein reductase] + H2O + H(+). It carries out the reaction 5beta-cholestane-3alpha,7alpha,12alpha-triol + reduced [NADPH--hemoprotein reductase] + O2 = 5beta-cholestane-3alpha,7alpha,12alpha,25-tetrol + oxidized [NADPH--hemoprotein reductase] + H2O + H(+). Catalyzes the 25-hydroxylation of vitamin D(3) (calciol), 1alpha-hydroxyvitamin D(3) (alphacalcidiol) and some C27 steroids. In addition the enzyme catalyzes the hydroxylation of positions 11 and 12 of dodecanoate. The protein is Vitamin D(3) 25-hydroxylase (CYP2D25) of Sus scrofa (Pig).